Consider the following 433-residue polypeptide: Phosphomethylpyrimidine synthase 2 (433 aa).

Residues asparagine 66, methionine 94, tyrosine 123, histidine 162, 184–186, 225–228, and glutamate 264 contribute to the substrate site; these read SRG and DALR. A Zn(2+)-binding site is contributed by histidine 268. Residue tyrosine 291 participates in substrate binding. Histidine 332 lines the Zn(2+) pocket. [4Fe-4S] cluster-binding residues include cysteine 408, cysteine 411, and cysteine 415.

It belongs to the ThiC family. [4Fe-4S] cluster is required as a cofactor.

The catalysed reaction is 5-amino-1-(5-phospho-beta-D-ribosyl)imidazole + S-adenosyl-L-methionine = 4-amino-2-methyl-5-(phosphooxymethyl)pyrimidine + CO + 5'-deoxyadenosine + formate + L-methionine + 3 H(+). It participates in cofactor biosynthesis; thiamine diphosphate biosynthesis. In terms of biological role, catalyzes the synthesis of the hydroxymethylpyrimidine phosphate (HMP-P) moiety of thiamine from aminoimidazole ribotide (AIR) in a radical S-adenosyl-L-methionine (SAM)-dependent reaction. The chain is Phosphomethylpyrimidine synthase 2 from Saccharolobus solfataricus (strain ATCC 35092 / DSM 1617 / JCM 11322 / P2) (Sulfolobus solfataricus).